The sequence spans 167 residues: Ribosome maturation factor RimM (167 aa).

A PRC barrel domain is found at 94 to 165; that stretch reads EHEYYYSDII…TIKITPMEGL (72 aa).

The protein belongs to the RimM family. In terms of assembly, binds ribosomal protein uS19.

Its subcellular location is the cytoplasm. An accessory protein needed during the final step in the assembly of 30S ribosomal subunit, possibly for assembly of the head region. Essential for efficient processing of 16S rRNA. May be needed both before and after RbfA during the maturation of 16S rRNA. It has affinity for free ribosomal 30S subunits but not for 70S ribosomes. This chain is Ribosome maturation factor RimM, found in Staphylococcus epidermidis (strain ATCC 12228 / FDA PCI 1200).